Consider the following 98-residue polypeptide: NADH-ubiquinone oxidoreductase chain 4L (98 aa).

Helical transmembrane passes span 2–22 (PSIS…MLIF), 29–49 (SLLC…LTIL), and 61–81 (ILLL…LVTV).

The protein belongs to the complex I subunit 4L family. As to quaternary structure, core subunit of respiratory chain NADH dehydrogenase (Complex I) which is composed of 45 different subunits.

The protein localises to the mitochondrion inner membrane. The catalysed reaction is a ubiquinone + NADH + 5 H(+)(in) = a ubiquinol + NAD(+) + 4 H(+)(out). Core subunit of the mitochondrial membrane respiratory chain NADH dehydrogenase (Complex I) which catalyzes electron transfer from NADH through the respiratory chain, using ubiquinone as an electron acceptor. Part of the enzyme membrane arm which is embedded in the lipid bilayer and involved in proton translocation. The polypeptide is NADH-ubiquinone oxidoreductase chain 4L (MT-ND4L) (Lemur catta (Ring-tailed lemur)).